Reading from the N-terminus, the 313-residue chain is MLARNNSLVTEFILAGLTDHPEFQQPLFFLFLVVYIVTMVGNLGLIILFGLNSHLHTPMYYFLFNLSFIDLCYSSVFTPKMLMNFVSKKNIISYVGCMTQLFFFLFFVISECYMLTSMAYDRYVAICNPLLYKVTMSHQVCSMLTFAAYIMGLAGATAHTGCMLRLTFCSANIINHYLCDILPLLQLSCTSTYVNEVVVLIVVGINIMVPSCTILISYVFIVTSILHIKSTQGRSKAFSTCSSHVIALSLFFGSAAFMYIKYSSGSMEQGKVSSVFYTNVVPMLNPLIYSLRNKDVKVALRKALIKIQRRNIF.

Residues Met1–Gln25 lie on the Extracellular side of the membrane. N-linked (GlcNAc...) asparagine glycosylation is present at Asn5. Residues Pro26–Ile46 form a helical membrane-spanning segment. The Cytoplasmic portion of the chain corresponds to Ile47–His54. A helical membrane pass occupies residues Leu55 to Ser75. The Extracellular segment spans residues Val76–Thr99. Cys97 and Cys189 form a disulfide bridge. Residues Gln100–Tyr120 form a helical membrane-spanning segment. The Cytoplasmic segment spans residues Asp121–Gln139. A helical transmembrane segment spans residues Val140–Thr160. The Extracellular portion of the chain corresponds to Gly161–Val197. Residues Val198–Ser217 form a helical membrane-spanning segment. Over Tyr218–Ala237 the chain is Cytoplasmic. Residues Phe238–Met258 form a helical membrane-spanning segment. Topologically, residues Tyr259–Gly270 are extracellular. A helical membrane pass occupies residues Lys271–Leu291. Residues Arg292–Phe313 lie on the Cytoplasmic side of the membrane.

This sequence belongs to the G-protein coupled receptor 1 family.

The protein resides in the cell membrane. In terms of biological role, odorant receptor. The sequence is that of Olfactory receptor 8B3 (OR8B3) from Homo sapiens (Human).